A 143-amino-acid polypeptide reads, in one-letter code: MTTEKGEQLRQQLIAAVVKKRAAIARAHEIVVRLLEPGIPEPEFLSLLCEIGPPNYSDIVDEREINKLCGYPLCSTVLENVPKQKYSISASKNKVYDITERKKFCSGYCFKASEYIKSQVPTSPLWLRDRETRPSFQLLPRNT.

The RTR1-type zinc finger occupies 46–129; that stretch reads SLLCEIGPPN…VPTSPLWLRD (84 aa). Zn(2+) contacts are provided by C69, C74, C105, and C109.

This sequence belongs to the RPAP2 family.

The protein localises to the nucleus. It carries out the reaction O-phospho-L-seryl-[protein] + H2O = L-seryl-[protein] + phosphate. The enzyme catalyses O-phospho-L-threonyl-[protein] + H2O = L-threonyl-[protein] + phosphate. In terms of biological role, putative RNA polymerase II subunit B1 C-terminal domain (CTD) phosphatase involved in RNA polymerase II transcription regulation. The protein is Putative RNA polymerase II subunit B1 CTD phosphatase RPAP2 homolog of Drosophila melanogaster (Fruit fly).